Here is a 35-residue protein sequence, read N- to C-terminus: Photosystem II reaction center protein T (35 aa).

The helical transmembrane segment at 3-23 (ALVYTFLLVSTLGIIFFAIFF) threads the bilayer.

This sequence belongs to the PsbT family. In terms of assembly, PSII is composed of 1 copy each of membrane proteins PsbA, PsbB, PsbC, PsbD, PsbE, PsbF, PsbH, PsbI, PsbJ, PsbK, PsbL, PsbM, PsbT, PsbY, PsbZ, Psb30/Ycf12, at least 3 peripheral proteins of the oxygen-evolving complex and a large number of cofactors. It forms dimeric complexes.

The protein localises to the plastid. The protein resides in the chloroplast thylakoid membrane. In terms of biological role, found at the monomer-monomer interface of the photosystem II (PS II) dimer, plays a role in assembly and dimerization of PSII. PSII is a light-driven water plastoquinone oxidoreductase, using light energy to abstract electrons from H(2)O, generating a proton gradient subsequently used for ATP formation. The protein is Photosystem II reaction center protein T of Nelumbo lutea (American lotus).